The chain runs to 376 residues: MARPWNFSAGPSALPESVLQQAAAEMLDWHGSGMSVMEMSHRGRQFVQICDEAEADLRELMNVPADYAIMFMQGGGLGENAIVPMNLIGRRGLPAADFVVTGHWSTRSHKEAGRYGDAQIAASSAQAVNIDGHEQRPFTWVPPLSDWRVRPEAAYLHLCSNETIGGVEFTEWPDLAAFGAPDVPLVVDASSHFLSRPLDVTRTGLLFAGAQKNAGPAGVTVVIARRDLLGKALSICPSAFDYANVAAEHSRYNTPPTFAIYVAGLVYKWVKAQGGVQGLEAANKAKADLLYGYLDASGFYRNPVHPAVRSRMNVPFVLHDESLNDAFLKGAEAAGLLALKGHKSVGGMRASIYNAMPLAGVQALVDYLKEFERLHG.

R42 is an L-glutamate binding site. Pyridoxal 5'-phosphate-binding residues include W104, T163, D188, and Q211. N6-(pyridoxal phosphate)lysine is present on K212. 253–254 (NT) is a binding site for pyridoxal 5'-phosphate.

Belongs to the class-V pyridoxal-phosphate-dependent aminotransferase family. SerC subfamily. In terms of assembly, homodimer. Pyridoxal 5'-phosphate is required as a cofactor.

It is found in the cytoplasm. The catalysed reaction is O-phospho-L-serine + 2-oxoglutarate = 3-phosphooxypyruvate + L-glutamate. It catalyses the reaction 4-(phosphooxy)-L-threonine + 2-oxoglutarate = (R)-3-hydroxy-2-oxo-4-phosphooxybutanoate + L-glutamate. The protein operates within amino-acid biosynthesis; L-serine biosynthesis; L-serine from 3-phospho-D-glycerate: step 2/3. It functions in the pathway cofactor biosynthesis; pyridoxine 5'-phosphate biosynthesis; pyridoxine 5'-phosphate from D-erythrose 4-phosphate: step 3/5. In terms of biological role, catalyzes the reversible conversion of 3-phosphohydroxypyruvate to phosphoserine and of 3-hydroxy-2-oxo-4-phosphonooxybutanoate to phosphohydroxythreonine. The sequence is that of Phosphoserine aminotransferase from Bordetella avium (strain 197N).